The primary structure comprises 128 residues: RxLR effector protein SFI2 (128 aa).

The N-terminal stretch at 1–22 (MRSAFYIFLVVAVLARCSVVAA) is a signal peptide. The RxLR-dEER motif lies at 52–71 (RLLRVAGREDDDATTDEEDR).

This sequence belongs to the RxLR effector family.

It localises to the secreted. It is found in the host nucleus. Effector that suppresses flg22-induced post-translational MAP kinase activation both tomato and Arabidopsis. The perception of highly conserved pathogen- or microbe-associated molecular patterns (PAMPs/MAMPs), such as flg22, triggers converging signaling pathways recruiting MAP kinase cascades and inducing transcriptional re-programming, yielding a generic antimicrobial response. This Phytophthora infestans (strain T30-4) (Potato late blight agent) protein is RxLR effector protein SFI2.